The primary structure comprises 193 residues: Ribose 1,5-bisphosphate phosphokinase PhnN (193 aa).

Residue 9-16 (GPSGAGKD) coordinates ATP.

The protein belongs to the ribose 1,5-bisphosphokinase family.

The enzyme catalyses alpha-D-ribose 1,5-bisphosphate + ATP = 5-phospho-alpha-D-ribose 1-diphosphate + ADP. The protein operates within metabolic intermediate biosynthesis; 5-phospho-alpha-D-ribose 1-diphosphate biosynthesis; 5-phospho-alpha-D-ribose 1-diphosphate from D-ribose 5-phosphate (route II): step 3/3. Its function is as follows. Catalyzes the phosphorylation of ribose 1,5-bisphosphate to 5-phospho-D-ribosyl alpha-1-diphosphate (PRPP). The sequence is that of Ribose 1,5-bisphosphate phosphokinase PhnN from Yersinia pestis.